Consider the following 506-residue polypeptide: PHD finger protein 10 (506 aa).

Disordered regions lie at residues 1 to 66 and 293 to 377; these read MAAV…QDFG and DPEL…SVSG. Basic and acidic residues predominate over residues 23-35; sequence VKEDNSNDTKDPE. Residues 52-66 show a composition bias toward polar residues; sequence GDSTPSCENSNQDFG. Positions 90-299 are SAY; the sequence is MLQEQVSEYL…DPLDPELLAL (210 aa). Over residues 326–338 the composition is skewed to low complexity; sequence SIDSSSMNMSESD. Basic and acidic residues predominate over residues 353–367; the sequence is KVKEKSSTPRKEGSK. A PHD-type 1; degenerate zinc finger spans residues 387-444; that stretch reads ICGICLKGKDANKKGRSERLIHCSQCDNSGHPSCLDMSAELVAVIKKYPWQCMECKTC. The PHD-type 2; degenerate zinc finger occupies 446–489; it reads ICGQPHHEEEMMFCDTCDRGYHTFCVGLGALPSGRWICDCCQKV.

The protein belongs to the SAYP family. Component of neural progenitors-specific chromatin remodeling complex (npBAF complex), a subfamily of ATP-dependent SWI/SNF chromatin remodeling complexes.

It is found in the nucleus. Functionally, involved in transcription activity regulation by chromatin remodeling in the context of the neural progenitors-specific chromatin remodeling complex (npBAF complex). May play a role in the proliferation of neural progenitors. This chain is PHD finger protein 10 (phf10), found in Xenopus laevis (African clawed frog).